The chain runs to 326 residues: Phospho-N-acetylmuramoyl-pentapeptide-transferase (326 aa).

Helical transmembrane passes span 4–24 (IWVAFTVSLAVTLIAGPLVIP), 49–69 (TPTMGGIIFLAGTAAGGFLLI), 74–94 (GLIVLLMALGYGFIGFLDDYI), 109–129 (KLLGQVLLAAALAYWAVFEAG), 151–171 (LGWWPFLAFTVLLVVFMSNAV), 179–199 (GLAAGVSMLVALALVPVALAA), 203–223 (GVAAGMAALAGGCLGFLFFNF), 228–248 (VFMGDTGSLALGGGLCAAAVV), 254–274 (LFLIIGGIYVLEALSVIIQVI), and 303–323 (VVITFWALTLVFAAAGLAGLY).

It belongs to the glycosyltransferase 4 family. MraY subfamily. Mg(2+) serves as cofactor.

The protein localises to the cell membrane. The enzyme catalyses UDP-N-acetyl-alpha-D-muramoyl-L-alanyl-gamma-D-glutamyl-meso-2,6-diaminopimeloyl-D-alanyl-D-alanine + di-trans,octa-cis-undecaprenyl phosphate = di-trans,octa-cis-undecaprenyl diphospho-N-acetyl-alpha-D-muramoyl-L-alanyl-D-glutamyl-meso-2,6-diaminopimeloyl-D-alanyl-D-alanine + UMP. It participates in cell wall biogenesis; peptidoglycan biosynthesis. Functionally, catalyzes the initial step of the lipid cycle reactions in the biosynthesis of the cell wall peptidoglycan: transfers peptidoglycan precursor phospho-MurNAc-pentapeptide from UDP-MurNAc-pentapeptide onto the lipid carrier undecaprenyl phosphate, yielding undecaprenyl-pyrophosphoryl-MurNAc-pentapeptide, known as lipid I. The sequence is that of Phospho-N-acetylmuramoyl-pentapeptide-transferase from Pelotomaculum thermopropionicum (strain DSM 13744 / JCM 10971 / SI).